Consider the following 108-residue polypeptide: Nucleoid-associated protein GWCH70_0020 (108 aa).

The segment at 1–34 (MMRGGMGNMQKMMKQMQKMQKEMQKAQEQLAEKT) is disordered. The span at 9 to 18 (MQKMMKQMQK) shows a compositional bias: low complexity. The span at 19-34 (MQKEMQKAQEQLAEKT) shows a compositional bias: basic and acidic residues.

Belongs to the YbaB/EbfC family. In terms of assembly, homodimer.

It is found in the cytoplasm. The protein localises to the nucleoid. Binds to DNA and alters its conformation. May be involved in regulation of gene expression, nucleoid organization and DNA protection. The chain is Nucleoid-associated protein GWCH70_0020 from Geobacillus sp. (strain WCH70).